A 218-amino-acid polypeptide reads, in one-letter code: Protein-lysine N-methyltransferase M142.8 (218 aa).

This sequence belongs to the class I-like SAM-binding methyltransferase superfamily. EFM5 family.

The protein localises to the cytoplasm. Its function is as follows. S-adenosyl-L-methionine-dependent protein-lysine N-methyltransferase that methylates elongation factor 1-alpha. The polypeptide is Protein-lysine N-methyltransferase M142.8 (Caenorhabditis elegans).